Here is a 175-residue protein sequence, read N- to C-terminus: Large ribosomal subunit protein uL10 (175 aa).

This sequence belongs to the universal ribosomal protein uL10 family. In terms of assembly, part of the ribosomal stalk of the 50S ribosomal subunit. The N-terminus interacts with L11 and the large rRNA to form the base of the stalk. The C-terminus forms an elongated spine to which L12 dimers bind in a sequential fashion forming a multimeric L10(L12)X complex.

Forms part of the ribosomal stalk, playing a central role in the interaction of the ribosome with GTP-bound translation factors. In Psychrobacter arcticus (strain DSM 17307 / VKM B-2377 / 273-4), this protein is Large ribosomal subunit protein uL10.